Reading from the N-terminus, the 392-residue chain is Alanine--glyoxylate aminotransferase (392 aa).

Threonine 9 bears the Phosphothreonine mark. At lysine 209 the chain carries N6-(pyridoxal phosphate)lysine. Lysine 225 carries the post-translational modification N6-acetyllysine; alternate. An N6-succinyllysine; alternate modification is found at lysine 225. Residues lysine 234 and lysine 312 each carry the N6-acetyllysine modification. Arginine 360 serves as a coordination point for substrate.

This sequence belongs to the class-V pyridoxal-phosphate-dependent aminotransferase family. Homodimer. The cofactor is pyridoxal 5'-phosphate. Liver.

The protein localises to the peroxisome. It carries out the reaction L-serine + pyruvate = 3-hydroxypyruvate + L-alanine. It catalyses the reaction glyoxylate + L-alanine = glycine + pyruvate. Its activity is regulated as follows. Alanine--glyoxylate aminotransferase activity is inhibited by 1 mM (aminooxy)acetic acid by 97.5%. In terms of biological role, peroxisomal aminotransferase that catalyzes the transamination of glyoxylate to glycine and contributes to the glyoxylate detoxification. Also catalyzes the transamination between L-serine and pyruvate and contributes to gluconeogenesis from the L-serine metabolism. The chain is Alanine--glyoxylate aminotransferase from Homo sapiens (Human).